Consider the following 986-residue polypeptide: DNA polymerase (986 aa).

Disordered stretches follow at residues 804-824 (DNPG…SPKR) and 944-969 (RKRD…SEND). Residues 948-968 (DDDDNNDDDDDDGCDSSDSEN) are compositionally biased toward acidic residues.

This sequence belongs to the DNA polymerase type-B family.

It carries out the reaction DNA(n) + a 2'-deoxyribonucleoside 5'-triphosphate = DNA(n+1) + diphosphate. Replicates the viral genome, host DNA polymerases cannot substitute for the viral enzyme in this process. The protein is DNA polymerase (POL) of Bombyx mori (Silk moth).